The sequence spans 206 residues: Thymidylate kinase (206 aa).

11-18 (GIDGAGKT) contacts ATP.

It belongs to the thymidylate kinase family.

The catalysed reaction is dTMP + ATP = dTDP + ADP. Functionally, phosphorylation of dTMP to form dTDP in both de novo and salvage pathways of dTTP synthesis. This Burkholderia ambifaria (strain MC40-6) protein is Thymidylate kinase.